A 711-amino-acid chain; its full sequence is Early transcription factor 82 kDa subunit (711 aa).

It belongs to the poxviridae VETF large subunit family. In terms of assembly, heterodimer of a 70 kDa and a 82 kDa subunit. Part of the early transcription complex composed of ETF, RAP94, and the DNA-directed RNA polymerase.

Functionally, acts with RNA polymerase to initiate transcription from early gene promoters. Is recruited by the RPO-associated protein of 94 kDa (RAP94) to form the early transcription complex, which also contains the core RNA polymerase. ETF heterodimer binds to early gene promoters. This Oryctolagus cuniculus (Rabbit) protein is Early transcription factor 82 kDa subunit (VETFL).